Reading from the N-terminus, the 533-residue chain is Nuclear receptor corepressor 1 (533 aa).

A compositionally biased stretch (basic and acidic residues) spans 1-17; that stretch reads KDKGPPPKSRYEEELRT. The disordered stretch occupies residues 1-21; it reads KDKGPPPKSRYEEELRTRGKT. Residues 29–33 carry the CORNR box 1 motif; it reads IDVII. Residues 37 to 144 form a disordered region; the sequence is IASDKDARER…EGMGQVPRTH (108 aa). The span at 38 to 47 shows a compositional bias: basic and acidic residues; it reads ASDKDARERG. Residues 48 to 59 show a composition bias toward low complexity; that stretch reads SQSSDSSSSLSS. Phosphoserine occurs at positions 73 and 77. The segment at 130 to 209 is ID1; it reads PSSQAEGMGQ…QSQTVLHPRP (80 aa). The interval 145-148 is required for interaction with RARA in the absence of its ligand; sequence RLIT. A CORNR box 2 motif is present at residues 153–157; that stretch reads ICQII. Residues 165–180 are compositionally biased toward low complexity; the sequence is QVPSQPSTSTFQTSPS. Residues 165-254 are disordered; the sequence is QVPSQPSTST…SPPQGPAVHE (90 aa). Residues 181-204 show a composition bias toward polar residues; that stretch reads ALSSTPVRTKPSSRYSPESQSQTV. Residues serine 196, serine 214, serine 230, serine 245, and serine 278 each carry the phosphoserine modification. A compositionally biased stretch (basic and acidic residues) spans 218–236; sequence LVDKSRGSRPGKSPERSHI. The interval 306–367 is ID2; that stretch reads IFRKLNSSGG…EDIIRKALMG (62 aa). A CORNR box 3 motif is present at residues 357–361; that stretch reads LEDII. A compositionally biased stretch (low complexity) spans 382–399; the sequence is HPVGVVPGSASTSVVTSS. Positions 382–476 are disordered; it reads HPVGVVPGSA…RPSSTGSTQF (95 aa). Threonine 492 bears the Phosphothreonine mark. Phosphoserine is present on residues serine 529 and serine 531.

It belongs to the N-CoR nuclear receptor corepressors family. Forms a large corepressor complex that contains SIN3A/B and histone deacetylases HDAC1 and HDAC2. This complex associates with the thyroid receptor (TR) and the retinoid acid receptor (RAR) in the absence of ligand. Interacts directly with RARA; the interaction is facilitated with RARA trimethylation. Component of the N-Cor repressor complex, at least composed of CBFA2T3, HEXIM1, NCOR1, NCOR2, HDAC3, TBL1X, TBL1XR1, CORO2A and GPS2. Interacts with ZBTB33; the interaction serves to recruit the N-CoR complex to promoter regions containing methylated CpG dinucleotides. Interacts with TRIM28 and KDM3A. Interacts (via the RD1 domain) with BAZ1A (via its N-terminal); the interaction corepresses a number of NCOR1-regulated genes. Interacts with BCL6, C1D, DACH1, HEXIM1, HDAC7, RORA, RORC, SAP30, SIAH2, SIN3A and SIN3B. May interact with DEAF1. Interacts with RXRA. Interacts with SETD5. Interacts with VDR. Interacts with ZBTB7A. Interacts with AR. Interacts with HDAC3. In terms of processing, ubiquitinated; mediated by SIAH2 and leading to its subsequent proteasomal degradation.

It localises to the nucleus. In terms of biological role, mediates transcriptional repression by certain nuclear receptors. Part of a complex which promotes histone deacetylation and the formation of repressive chromatin structures which may impede the access of basal transcription factors. Participates in the transcriptional repressor activity produced by BCL6. Recruited by ZBTB7A to the androgen response elements/ARE on target genes, negatively regulates androgen receptor signaling and androgen-induced cell proliferation. Mediates the NR1D1-dependent repression and circadian regulation of TSHB expression. The NCOR1-HDAC3 complex regulates the circadian expression of the core clock gene ARTNL/BMAL1 and the genes involved in lipid metabolism in the liver. The sequence is that of Nuclear receptor corepressor 1 (Ncor1) from Rattus norvegicus (Rat).